A 519-amino-acid chain; its full sequence is Mannosyl-oligosaccharide alpha-1,2-mannosidase (519 aa).

The first 22 residues, 1–22 (MKGSPVLAVCAAALTLIPSVVA), serve as a signal peptide directing secretion. N-linked (GlcNAc...) asparagine glycosylation is present at N187. Residues C337 and C366 are joined by a disulfide bond. The active-site Proton donor is the E380. A glycan (N-linked (GlcNAc...) asparagine) is linked at N443. Residue T507 coordinates Ca(2+).

The protein belongs to the glycosyl hydrolase 47 family. Monomer. Requires Ca(2+) as cofactor. Mg(2+) serves as cofactor.

It is found in the secreted. It catalyses the reaction N(4)-(alpha-D-Man-(1-&gt;2)-alpha-D-Man-(1-&gt;2)-alpha-D-Man-(1-&gt;3)-[alpha-D-Man-(1-&gt;2)-alpha-D-Man-(1-&gt;3)-[alpha-D-Man-(1-&gt;2)-alpha-D-Man-(1-&gt;6)]-alpha-D-Man-(1-&gt;6)]-beta-D-Man-(1-&gt;4)-beta-D-GlcNAc-(1-&gt;4)-beta-D-GlcNAc)-L-asparaginyl-[protein] (N-glucan mannose isomer 9A1,2,3B1,2,3) + 4 H2O = N(4)-(alpha-D-Man-(1-&gt;3)-[alpha-D-Man-(1-&gt;3)-[alpha-D-Man-(1-&gt;6)]-alpha-D-Man-(1-&gt;6)]-beta-D-Man-(1-&gt;4)-beta-D-GlcNAc-(1-&gt;4)-beta-D-GlcNAc)-L-asparaginyl-[protein] (N-glucan mannose isomer 5A1,2) + 4 beta-D-mannose. It carries out the reaction N(4)-(alpha-D-Man-(1-&gt;2)-alpha-D-Man-(1-&gt;2)-alpha-D-Man-(1-&gt;3)-[alpha-D-Man-(1-&gt;3)-[alpha-D-Man-(1-&gt;2)-alpha-D-Man-(1-&gt;6)]-alpha-D-Man-(1-&gt;6)]-beta-D-Man-(1-&gt;4)-beta-D-GlcNAc-(1-&gt;4)-beta-D-GlcNAc)-L-asparaginyl-[protein] (N-glucan mannose isomer 8A1,2,3B1,3) + 3 H2O = N(4)-(alpha-D-Man-(1-&gt;3)-[alpha-D-Man-(1-&gt;3)-[alpha-D-Man-(1-&gt;6)]-alpha-D-Man-(1-&gt;6)]-beta-D-Man-(1-&gt;4)-beta-D-GlcNAc-(1-&gt;4)-beta-D-GlcNAc)-L-asparaginyl-[protein] (N-glucan mannose isomer 5A1,2) + 3 beta-D-mannose. It functions in the pathway protein modification; protein glycosylation. Its function is as follows. Alpha-mannosidase involved in the maturation of Asn-linked oligosaccharides. Progressively trims alpha-1,2-linked mannose residues from Man(9)GlcNAc(2) to produce Man(5)GlcNAc(2). This is Mannosyl-oligosaccharide alpha-1,2-mannosidase from Coccidioides posadasii (strain RMSCC 757 / Silveira) (Valley fever fungus).